The sequence spans 93 residues: Small ribosomal subunit protein uS19 (93 aa).

This sequence belongs to the universal ribosomal protein uS19 family.

Functionally, protein S19 forms a complex with S13 that binds strongly to the 16S ribosomal RNA. This chain is Small ribosomal subunit protein uS19, found in Rubrobacter xylanophilus (strain DSM 9941 / JCM 11954 / NBRC 16129 / PRD-1).